The following is a 320-amino-acid chain: Agamous-like MADS-box protein AGL90 (320 aa).

Positions 1 to 59 (MKKVKLSLIANERSRKTSFMKRKNGIFKKLHELSTLCGVQACALIYSPFIPVPESWPSR) constitute an MADS-box domain. Residues 80 to 115 (KMMDQETHLMERITKAKEQLKNLAAENRELQVRRFM) adopt a coiled-coil conformation.

As to quaternary structure, interacts with AGL62.

It is found in the nucleus. In terms of biological role, probable transcription factor. This is Agamous-like MADS-box protein AGL90 (AGL90) from Arabidopsis thaliana (Mouse-ear cress).